A 171-amino-acid chain; its full sequence is MAEKRNIFLVGPMGAGKSTIGRHLAQMLHLDFHDSDQEIESRTGADIAWVFDVEGEEGFRVRETQVVADLTEKQGIVLATGGGSIQSKEIRNNLSARGIVVYLETTIDKQVARTQRDKRRPLLQVDDPREVLENLAATRNPLYEEIADVIVKTDEQSAKVVANQIIEQLGF.

14–19 (GAGKST) lines the ATP pocket. Residue Ser18 coordinates Mg(2+). Residues Asp36, Arg60, and Gly82 each contribute to the substrate site. Position 120 (Arg120) interacts with ATP. Arg139 provides a ligand contact to substrate. Gln156 provides a ligand contact to ATP.

It belongs to the shikimate kinase family. In terms of assembly, monomer. Requires Mg(2+) as cofactor.

It is found in the cytoplasm. It carries out the reaction shikimate + ATP = 3-phosphoshikimate + ADP + H(+). The protein operates within metabolic intermediate biosynthesis; chorismate biosynthesis; chorismate from D-erythrose 4-phosphate and phosphoenolpyruvate: step 5/7. Its function is as follows. Catalyzes the specific phosphorylation of the 3-hydroxyl group of shikimic acid using ATP as a cosubstrate. The sequence is that of Shikimate kinase from Shewanella sediminis (strain HAW-EB3).